The sequence spans 161 residues: MTKTGVYPGTFDPITNGHLDVIKRALKIFDELIVAVAMSSYKKTPIFTVEERVHFIAQTTKDLKNLKVEVFDGLLVNFIKEKKAVAIVRGLRAVSDYEFELQLAHANRRLFRDIETVFLMPSEEYSFLSSSLVKEIAYFGGSVKSLVPPIVEKALRNKFKK.

Threonine 10 contributes to the substrate binding site. Residues 10–11 (TF) and histidine 18 each bind ATP. 3 residues coordinate substrate: lysine 42, leucine 75, and arginine 89. Residues 90–92 (GLR), glutamate 100, and 125–131 (YSFLSSS) contribute to the ATP site.

The protein belongs to the bacterial CoaD family. In terms of assembly, homohexamer. It depends on Mg(2+) as a cofactor.

It is found in the cytoplasm. It catalyses the reaction (R)-4'-phosphopantetheine + ATP + H(+) = 3'-dephospho-CoA + diphosphate. Its pathway is cofactor biosynthesis; coenzyme A biosynthesis; CoA from (R)-pantothenate: step 4/5. In terms of biological role, reversibly transfers an adenylyl group from ATP to 4'-phosphopantetheine, yielding dephospho-CoA (dPCoA) and pyrophosphate. In Thermodesulfovibrio yellowstonii (strain ATCC 51303 / DSM 11347 / YP87), this protein is Phosphopantetheine adenylyltransferase.